Here is a 183-residue protein sequence, read N- to C-terminus: MDQAKLARMQASVRIGTFYSFLWIFEVLVSESVFLRMTATNFIDRGKGTPRRKVKKVHKSSGADDKKLQTTLKKMNVQPIQAIEEVNMFKEDGNVIHFAAPKVHASVPSNTFALYGNGEEKELTELVPGILNQLGPDSLASLRKLAESYQNMQKQAGTEGKKDEDEDDIPDLVEGENFESNVE.

Residues 62 to 127 form the NAC-A/B domain; sequence GADDKKLQTT…GEEKELTELV (66 aa). The segment at 150 to 183 is disordered; it reads QNMQKQAGTEGKKDEDEDDIPDLVEGENFESNVE. Residues 164 to 183 show a composition bias toward acidic residues; that stretch reads EDEDDIPDLVEGENFESNVE.

It belongs to the NAC-beta family. Part of the nascent polypeptide-associated complex (NAC), consisting of egd2 and egd1. NAC associates with ribosomes via egd1.

The protein resides in the cytoplasm. The protein localises to the nucleus. Component of the nascent polypeptide-associated complex (NAC), a dynamic component of the ribosomal exit tunnel, protecting the emerging polypeptides from interaction with other cytoplasmic proteins to ensure appropriate nascent protein targeting. The NAC complex also promotes mitochondrial protein import by enhancing productive ribosome interactions with the outer mitochondrial membrane and blocks the inappropriate interaction of ribosomes translating non-secretory nascent polypeptides with translocation sites in the membrane of the endoplasmic reticulum. EGD1 may act as a transcription factor that exert a negative effect on the expression of several genes that are transcribed by RNA polymerase II. The protein is Nascent polypeptide-associated complex subunit beta (egd1) of Neosartorya fischeri (strain ATCC 1020 / DSM 3700 / CBS 544.65 / FGSC A1164 / JCM 1740 / NRRL 181 / WB 181) (Aspergillus fischerianus).